The primary structure comprises 193 residues: MGVDLTGVQKKKRVVRHHTYSTNPYIKLLIKLYKFLGKRTNSPFNKLIHKRLLKSRNNRAPISLSRIAVCMRRRTVWLKKGKKSPIAVIVGDVLDDVRMTRIPALRICALRFSKSARERITGAGGECLTFDQLAMMAPTGKNTMLLRGRKSGRESVKHFGAAGVPGSHAKPHVSSRGKERQRSSKRRHAFRHK.

The segment at 158–193 is disordered; the sequence is HFGAAGVPGSHAKPHVSSRGKERQRSSKRRHAFRHK. Positions 183–193 are enriched in basic residues; it reads SSKRRHAFRHK.

This sequence belongs to the eukaryotic ribosomal protein eL18 family.

Its subcellular location is the cytoplasm. The protein is Large ribosomal subunit protein eL18 (RPL18-A) of Trypanosoma brucei brucei (strain 927/4 GUTat10.1).